Consider the following 58-residue polypeptide: MRCLPVFIILPLLIPSAPSVDAQPMTEDDVPLASFHEQTLQELWNKRPCCPLIPGCCR.

Residues 1–22 form the signal peptide; it reads MRCLPVFIILPLLIPSAPSVDA. A propeptide spanning residues 23–47 is cleaved from the precursor; sequence QPMTEDDVPLASFHEQTLQELWNKR.

Belongs to the conotoxin T superfamily. In terms of processing, contains 2 disulfide bonds that can be either 'C1-C3, C2-C4' or 'C1-C4, C2-C3', since these disulfide connectivities have been observed for conotoxins with cysteine framework V (for examples, see AC P0DQQ7 and AC P81755). As to expression, expressed by the venom duct.

It localises to the secreted. The sequence is that of Conotoxin Leo-T2 from Conus leopardus (Leopard cone).